A 504-amino-acid polypeptide reads, in one-letter code: Arabinose import ATP-binding protein AraG (504 aa).

ABC transporter domains are found at residues 8–243 (LSFR…MVGR) and 256–499 (YGEE…MPKV). Residue 40-47 (GENGAGKS) participates in ATP binding.

The protein belongs to the ABC transporter superfamily. Arabinose importer (TC 3.A.1.2.2) family. The complex is composed of two ATP-binding proteins (AraG), two transmembrane proteins (AraH) and a solute-binding protein (AraF).

The protein resides in the cell inner membrane. It carries out the reaction L-arabinose(out) + ATP + H2O = L-arabinose(in) + ADP + phosphate + H(+). Its function is as follows. Part of the ABC transporter complex AraFGH involved in arabinose import. Responsible for energy coupling to the transport system. The chain is Arabinose import ATP-binding protein AraG from Escherichia coli (strain UTI89 / UPEC).